Reading from the N-terminus, the 25-residue chain is Chlorocatechol 1,2-dioxygenase 1 (25 aa).

This sequence belongs to the intradiol ring-cleavage dioxygenase family. It depends on Fe(3+) as a cofactor.

It catalyses the reaction 3,5-dichlorocatechol + O2 = (2E,4E)-2,4-dichloromuconate + 2 H(+). It functions in the pathway xenobiotic degradation; 2-(2,4-dichlorophenoxy)propanoate degradation. In Delftia acidovorans (Pseudomonas acidovorans), this protein is Chlorocatechol 1,2-dioxygenase 1 (tfdC).